A 282-amino-acid chain; its full sequence is Nucleotide-binding protein Shew_3314 (282 aa).

8 to 15 is an ATP binding site; it reads GRSGSGKS. 56 to 59 is a binding site for GTP; sequence DVRN.

Belongs to the RapZ-like family.

In terms of biological role, displays ATPase and GTPase activities. The sequence is that of Nucleotide-binding protein Shew_3314 from Shewanella loihica (strain ATCC BAA-1088 / PV-4).